Consider the following 62-residue polypeptide: Large ribosomal subunit protein bL28 (62 aa).

Positions 1-24 (MGKQCFVTGRKASTGNNRSHALNS) are disordered. The segment covering 11 to 24 (KASTGNNRSHALNS) has biased composition (polar residues).

Belongs to the bacterial ribosomal protein bL28 family.

This chain is Large ribosomal subunit protein bL28, found in Staphylococcus saprophyticus subsp. saprophyticus (strain ATCC 15305 / DSM 20229 / NCIMB 8711 / NCTC 7292 / S-41).